The following is a 238-amino-acid chain: MTPHINAPAGAFADVVLMPGDPLRAKYIAETFLENAQEVTNVRNMLGYTGTYKGRKISVMGHGMGIPSCSIYAKELITEYGVKKIIRVGSCGAVNMDVKIRDVIIGLGACTDSKVNRIRFKDNDFAAIADFGMARAAVQAAKNKGIDVKVGNLFSADLFYTPDLEMFDVMEKYGILGVEMEAAGIYGVAAEFKAKALTICTVSDHIRTHEQTSAEERQLTFNEMIEIALESVLLEDSL.

His-4 contacts a purine D-ribonucleoside. Phosphate-binding positions include Gly-20, Arg-24, Arg-43, and 87-90 (RVGS). Residues 179-181 (EME) and 203-204 (SD) each bind a purine D-ribonucleoside. The Proton donor role is filled by Asp-204.

This sequence belongs to the PNP/UDP phosphorylase family. As to quaternary structure, homohexamer; trimer of homodimers.

It carries out the reaction a purine D-ribonucleoside + phosphate = a purine nucleobase + alpha-D-ribose 1-phosphate. The enzyme catalyses a purine 2'-deoxy-D-ribonucleoside + phosphate = a purine nucleobase + 2-deoxy-alpha-D-ribose 1-phosphate. Catalyzes the reversible phosphorolytic breakdown of the N-glycosidic bond in the beta-(deoxy)ribonucleoside molecules, with the formation of the corresponding free purine bases and pentose-1-phosphate. The polypeptide is Purine nucleoside phosphorylase DeoD-type (Histophilus somni (strain 2336) (Haemophilus somnus)).